Reading from the N-terminus, the 29-residue chain is Kalata-B11 (29 aa).

Residues 1-29 (GLPVCGETCFGGTCNTPGCSCTDPICTRD) constitute a cross-link (cyclopeptide (Gly-Asp)). Intrachain disulfides connect cysteine 5–cysteine 19, cysteine 9–cysteine 21, and cysteine 14–cysteine 26.

In terms of processing, this is a cyclic peptide.

Probably participates in a plant defense mechanism. The polypeptide is Kalata-B11 (Oldenlandia affinis).